Reading from the N-terminus, the 302-residue chain is Glutaminase (302 aa).

Substrate-binding residues include Ser61, Asn111, Glu155, Asn162, Tyr186, Tyr238, and Val256.

It belongs to the glutaminase family. Homotetramer.

It carries out the reaction L-glutamine + H2O = L-glutamate + NH4(+). The protein is Glutaminase of Pseudomonas putida (strain ATCC 700007 / DSM 6899 / JCM 31910 / BCRC 17059 / LMG 24140 / F1).